The chain runs to 520 residues: MAYFNQHQSMISKRYLTFFSKSKKKKPFSAGQLIGLILGPLLFLLTLLFFHPQDLPWKGVYVLAITLWIATWWITEAIPIAATSLLPIVLLPLGHILTPEQVSSEYGNDIIFLFLGGFILAIAMERWNLHTRVALTIINLIGASTSKILLGFMVATGFLSMFVSNTAAVMIMIPIGLAIIKEAHDLQEANTNQTSIQKFEKSLVLAIGYAGTIGGLGTLIGTPPLIILKGQYMQHFGHEISFAKWMIVGIPTVIVLLGITWLYLRYVAFRHDLKYLPGGQTLIKQKLDELGKMKYEEKVVQTIFVLASLLWITREFLLKKWEVTSSVADGTIAIFISILLFIIPAKNTEKHRRIIDWEVAKELPWGVLILFGGGLALAKGISESGLAKWLGEQLKSLNGVSPILIVIVITIFVLFLTEVTSNTATATMILPILATLSVAVGVHPLLLMAPAAMAANCAYMLPVGTPPNAIIFGSGKISIKQMASVGFWVNLISAIIIILVVYYVMPIVLGIDINQPLPLK.

The next 14 helical transmembrane spans lie at 30–50 (AGQL…LLFF), 55–75 (LPWK…WWIT), 77–97 (AIPI…GHIL), 104–124 (SEYG…AIAM), 160–180 (SMFV…LAII), 207–227 (IGYA…PLII), 242–262 (FAKW…ITWL), 298–318 (KVVQ…EFLL), 323–343 (VTSS…LFII), 362–382 (ELPW…KGIS), 399–419 (GVSP…LTEV), 428–448 (MILP…LLLM), 452–472 (AMAA…AIIF), and 491–511 (LISA…VLGI).

Belongs to the SLC13A/DASS transporter (TC 2.A.47) family. NADC subfamily.

It localises to the cell membrane. In terms of biological role, mediates the transport of the dicarboxylates fumarate, malate, and succinate across the cytoplasmic membrane via a Na(+)-electrochemical gradient. The sequence is that of Sodium-dependent dicarboxylate transporter SdcS (sdcS) from Staphylococcus aureus (strain NCTC 8325 / PS 47).